The chain runs to 759 residues: MTMKKSIIAFPRIGSNRELKFALEKYFRKEITEEELQTVAKEIRLENWKSQKEAGIDSPISNDFSFYDQTLDLSIALGAIPGSYKNLELSELDTLFALARGFQDEQNDVKARPMKKWFNTNYHYLVPEINKDTIIKANFSKLLNEYKEAKSAGFETRPTIIGPYTFLVLADYKSGATKDTVLSDVIVAFQTLLKELNQLGVEWLQIEEPALVLDQTEEEKKLFVSIYEELLKSKNNLNILLQTYFGDVRDSYKEIIKLDFDGIGLDFIEGRDSLALIQKYGFPKKKILFAGLVNGKNIWRNNYQKTLELLTALDEVADIVINTSCSLQHVPVTIKNETKLSKEILKHFSFATEKLNEIDEISDIYFNKNTSFLKKNVELFENERVRENSKLKQKLDKLTEKDFTRQPSLVERRASQSQSLNLPVLPTTTIGSFPQTAEVRKVRLQNKRGELRQADYDTFLEEKIKECLKLQEDIGLDVLVHGEFERNDMVEYFGEKLEGYVFTQKAWVQSYGTRCVKPPIVWTDVTRPEAMTVRWSAYAQSQTSKPVKGMLTGPVTILNWSFPREDISLKASTLQLALAVQEEVLDLEKAGIKIIQIDEAALREKLPLRKSDWYKEYLDWAIPAFRLVHSKVKPETQIHTHMCYSEFEDIIPSIDAMDADVISFEASRSELSIIDALKAHHFKTLVGPGVYDIHSPRIPSVKEIQNQLEKILDKLPIEQVWVNPDCGLKTRGNAETIPSLRHLVEATRVLRKEKVVYDK.

5-methyltetrahydropteroyltri-L-glutamate-binding positions include 17 to 20 (RELK) and lysine 116. L-homocysteine is bound by residues 430–432 (IGS) and glutamate 483. Residues 430-432 (IGS) and glutamate 483 contribute to the L-methionine site. Residues 514–515 (RC) and tryptophan 560 contribute to the 5-methyltetrahydropteroyltri-L-glutamate site. An L-homocysteine-binding site is contributed by aspartate 598. Position 598 (aspartate 598) interacts with L-methionine. Glutamate 604 provides a ligand contact to 5-methyltetrahydropteroyltri-L-glutamate. Residues histidine 641, cysteine 643, and glutamate 665 each contribute to the Zn(2+) site. Catalysis depends on histidine 694, which acts as the Proton donor. Cysteine 726 provides a ligand contact to Zn(2+).

This sequence belongs to the vitamin-B12 independent methionine synthase family. Requires Zn(2+) as cofactor.

It carries out the reaction 5-methyltetrahydropteroyltri-L-glutamate + L-homocysteine = tetrahydropteroyltri-L-glutamate + L-methionine. It participates in amino-acid biosynthesis; L-methionine biosynthesis via de novo pathway; L-methionine from L-homocysteine (MetE route): step 1/1. Its function is as follows. Catalyzes the transfer of a methyl group from 5-methyltetrahydrofolate to homocysteine resulting in methionine formation. The chain is 5-methyltetrahydropteroyltriglutamate--homocysteine methyltransferase from Lactococcus lactis subsp. lactis (strain IL1403) (Streptococcus lactis).